Reading from the N-terminus, the 464-residue chain is NADH dehydrogenase [ubiquinone] flavoprotein 1, mitochondrial (464 aa).

The transit peptide at 1-20 (MLAARHFLGGLVPVRVSVRF) directs the protein to the mitochondrion. Lys81 is subject to N6-acetyllysine; alternate. Residue Lys81 is modified to N6-succinyllysine; alternate. 87 to 96 (GRGGAGFPTG) contacts NADH. Position 104 is an N6-acetyllysine (Lys104). An FMN-binding site is contributed by 199–247 (RGAGAYICGEETALIESIEGKQGKPRLKPPFPADVGVFGCPTTVANVET). Residue Arg257 is modified to Omega-N-methylarginine. Lys375 carries the post-translational modification N6-acetyllysine. [4Fe-4S] cluster is bound by residues Cys379, Cys382, Cys385, and Cys425.

This sequence belongs to the complex I 51 kDa subunit family. As to quaternary structure, core subunit of respiratory chain NADH dehydrogenase (Complex I) which is composed of 45 different subunits. This is a component of the flavoprotein-sulfur (FP) fragment of the enzyme. Interacts with RAB5IF. The cofactor is FMN. It depends on [4Fe-4S] cluster as a cofactor.

The protein resides in the mitochondrion inner membrane. It carries out the reaction a ubiquinone + NADH + 5 H(+)(in) = a ubiquinol + NAD(+) + 4 H(+)(out). Core subunit of the mitochondrial membrane respiratory chain NADH dehydrogenase (Complex I) which catalyzes electron transfer from NADH through the respiratory chain, using ubiquinone as an electron acceptor. Part of the peripheral arm of the enzyme, where the electrons from NADH are accepted by flavin mononucleotide (FMN) and then passed along a chain of iron-sulfur clusters by electron tunnelling to the final acceptor ubiquinone. Contains FMN, which is the initial electron acceptor as well as one iron-sulfur cluster. This Mus musculus (Mouse) protein is NADH dehydrogenase [ubiquinone] flavoprotein 1, mitochondrial.